A 765-amino-acid polypeptide reads, in one-letter code: DNA ligase (765 aa).

A disordered region spans residues 1–34 (MAGDDEDRAVPAAEGAPPPSALPPVSGLDVKAAE). NAD(+) is bound by residues 61-65 (DAEYD), 110-111 (SL), and glutamate 144. Residue lysine 146 is the N6-AMP-lysine intermediate of the active site. Arginine 167, glutamate 204, lysine 317, and lysine 341 together coordinate NAD(+). Cysteine 446, cysteine 449, cysteine 464, and cysteine 470 together coordinate Zn(2+). In terms of domain architecture, BRCT spans 687 to 765 (ATDSAIAGKT…EDEWLAIAQG (79 aa)).

This sequence belongs to the NAD-dependent DNA ligase family. LigA subfamily. It depends on Mg(2+) as a cofactor. The cofactor is Mn(2+).

It carries out the reaction NAD(+) + (deoxyribonucleotide)n-3'-hydroxyl + 5'-phospho-(deoxyribonucleotide)m = (deoxyribonucleotide)n+m + AMP + beta-nicotinamide D-nucleotide.. DNA ligase that catalyzes the formation of phosphodiester linkages between 5'-phosphoryl and 3'-hydroxyl groups in double-stranded DNA using NAD as a coenzyme and as the energy source for the reaction. It is essential for DNA replication and repair of damaged DNA. The protein is DNA ligase of Paracoccus denitrificans (strain Pd 1222).